The primary structure comprises 890 residues: Translation initiation factor IF-2 (890 aa).

Residues 45–304 form a disordered region; sequence LIDHLNQKNS…LQQGFQKPAQ (260 aa). Over residues 67–81 the composition is skewed to polar residues; the sequence is STLNIPGTGGKSKSV. Residues 92 to 217 are compositionally biased toward basic and acidic residues; sequence VKRDPQEAER…RMAEENKWTD (126 aa). A compositionally biased stretch (basic residues) spans 252-266; that stretch reads GRGRNAKAARPKKGN. The span at 267 to 280 shows a compositional bias: basic and acidic residues; the sequence is KHAESKADREEARA. One can recognise a tr-type G domain in the interval 389-558; it reads PRAPVVTIMG…LLQAEVLELK (170 aa). The segment at 398–405 is G1; the sequence is GHVDHGKT. 398 to 405 lines the GTP pocket; that stretch reads GHVDHGKT. A G2 region spans residues 423–427; sequence GITQH. The G3 stretch occupies residues 444-447; the sequence is DTPG. Residues 444–448 and 498–501 contribute to the GTP site; these read DTPGH and NKID. Residues 498–501 are G4; sequence NKID. Residues 534–536 are G5; it reads SAK. N6-acetyllysine is present on K808.

Belongs to the TRAFAC class translation factor GTPase superfamily. Classic translation factor GTPase family. IF-2 subfamily.

It is found in the cytoplasm. Its function is as follows. One of the essential components for the initiation of protein synthesis. Protects formylmethionyl-tRNA from spontaneous hydrolysis and promotes its binding to the 30S ribosomal subunits. Also involved in the hydrolysis of GTP during the formation of the 70S ribosomal complex. This Escherichia coli (strain 55989 / EAEC) protein is Translation initiation factor IF-2.